The sequence spans 252 residues: 3-dehydroquinate dehydratase (252 aa).

Residues serine 21, 46–48, and arginine 82 contribute to the 3-dehydroquinate site; that span reads EWR. Histidine 143 acts as the Proton donor/acceptor in catalysis. Lysine 170 serves as the catalytic Schiff-base intermediate with substrate. 3-dehydroquinate is bound by residues arginine 213, serine 232, and glutamine 236.

Belongs to the type-I 3-dehydroquinase family. Homodimer.

The catalysed reaction is 3-dehydroquinate = 3-dehydroshikimate + H2O. It functions in the pathway metabolic intermediate biosynthesis; chorismate biosynthesis; chorismate from D-erythrose 4-phosphate and phosphoenolpyruvate: step 3/7. In terms of biological role, involved in the third step of the chorismate pathway, which leads to the biosynthesis of aromatic amino acids. Catalyzes the cis-dehydration of 3-dehydroquinate (DHQ) and introduces the first double bond of the aromatic ring to yield 3-dehydroshikimate. The polypeptide is 3-dehydroquinate dehydratase (Shigella sonnei (strain Ss046)).